The sequence spans 359 residues: Protein mab-21-like 2-A (359 aa).

This sequence belongs to the mab-21 family.

The protein resides in the nucleus. It is found in the cytoplasm. Its function is as follows. Required for normal development of the eye. May promote dorsalization of the developing embryo by antagonizing the ventralizing factor bmp4. Functional antagonism of bmp4 may require interaction with smad1. Required for gastrulation and subsequent neural development. May function as a transcriptional repressor. The chain is Protein mab-21-like 2-A (mab21l2-a) from Xenopus laevis (African clawed frog).